Here is a 345-residue protein sequence, read N- to C-terminus: Phosphoribosylformylglycinamidine cyclo-ligase (345 aa).

This sequence belongs to the AIR synthase family.

The protein resides in the cytoplasm. It carries out the reaction 2-formamido-N(1)-(5-O-phospho-beta-D-ribosyl)acetamidine + ATP = 5-amino-1-(5-phospho-beta-D-ribosyl)imidazole + ADP + phosphate + H(+). Its pathway is purine metabolism; IMP biosynthesis via de novo pathway; 5-amino-1-(5-phospho-D-ribosyl)imidazole from N(2)-formyl-N(1)-(5-phospho-D-ribosyl)glycinamide: step 2/2. The polypeptide is Phosphoribosylformylglycinamidine cyclo-ligase (Pasteurella multocida (strain Pm70)).